The chain runs to 296 residues: Light-independent protochlorophyllide reductase iron-sulfur ATP-binding protein (296 aa).

Residues 1–11 (MTSTITRKEDG) show a composition bias toward basic and acidic residues. Residues 1–20 (MTSTITRKEDGEGSVQVKQD) are disordered. Residues 39-44 (GIGKST) and K68 each bind ATP. Residue S43 coordinates Mg(2+). [4Fe-4S] cluster contacts are provided by C124 and C158. Residue 209-210 (NR) coordinates ATP.

Belongs to the NifH/BchL/ChlL family. As to quaternary structure, homodimer. Protochlorophyllide reductase is composed of three subunits; ChlL, ChlN and ChlB. [4Fe-4S] cluster is required as a cofactor.

It catalyses the reaction chlorophyllide a + oxidized 2[4Fe-4S]-[ferredoxin] + 2 ADP + 2 phosphate = protochlorophyllide a + reduced 2[4Fe-4S]-[ferredoxin] + 2 ATP + 2 H2O. Its pathway is porphyrin-containing compound metabolism; chlorophyll biosynthesis (light-independent). In terms of biological role, component of the dark-operative protochlorophyllide reductase (DPOR) that uses Mg-ATP and reduced ferredoxin to reduce ring D of protochlorophyllide (Pchlide) to form chlorophyllide a (Chlide). This reaction is light-independent. The L component serves as a unique electron donor to the NB-component of the complex, and binds Mg-ATP. This Prochlorococcus marinus (strain NATL1A) protein is Light-independent protochlorophyllide reductase iron-sulfur ATP-binding protein.